Here is a 582-residue protein sequence, read N- to C-terminus: Adenine deaminase (582 aa).

Belongs to the metallo-dependent hydrolases superfamily. Adenine deaminase family. Mn(2+) is required as a cofactor.

The enzyme catalyses adenine + H2O + H(+) = hypoxanthine + NH4(+). This is Adenine deaminase from Oceanobacillus iheyensis (strain DSM 14371 / CIP 107618 / JCM 11309 / KCTC 3954 / HTE831).